The primary structure comprises 373 residues: Probable neutral protease 2 homolog MCYG_05201 (373 aa).

The first 19 residues, 1–19 (MQFFTALAAVGALVAPALA), serve as a signal peptide directing secretion. Positions 20–187 (LPTQVPANQS…AHIVGTIDKR (168 aa)) are excised as a propeptide. Intrachain disulfides connect Cys195-Cys265 and Cys272-Cys290. His314 lines the Zn(2+) pocket. The active site involves Glu315. His318 and Asp329 together coordinate Zn(2+).

This sequence belongs to the peptidase M35 family. The cofactor is Zn(2+).

It localises to the secreted. It carries out the reaction Preferential cleavage of bonds with hydrophobic residues in P1'. Also 3-Asn-|-Gln-4 and 8-Gly-|-Ser-9 bonds in insulin B chain.. Functionally, probable secreted metalloprotease that shows high activities on basic nuclear substrates such as histone and protamine. May be involved in virulence. In Arthroderma otae (strain ATCC MYA-4605 / CBS 113480) (Microsporum canis), this protein is Probable neutral protease 2 homolog MCYG_05201.